Consider the following 463-residue polypeptide: Fibrinogen beta chain (463 aa).

Positions 1 to 12 (ASVEYDNEEDSP) are enriched in acidic residues. The interval 1–56 (ASVEYDNEEDSPQIDARAHRPLDKRQEAAPTLRPVAPPISGTGYQPRPPKQDKQAM) is disordered. At Tyr-5 the chain carries Sulfotyrosine. The segment covering 16–27 (ARAHRPLDKRQE) has biased composition (basic and acidic residues). Disulfide bonds link Cys-205–Cys-289 and Cys-215–Cys-244. The Fibrinogen C-terminal domain maps to 206 to 461 (NIPVVSGREC…KMSMKIKPYF (256 aa)). N-linked (GlcNAc...) asparagine glycosylation occurs at Asn-367. The Ca(2+) site is built by Asp-384, Asp-386, and Trp-388. A disulfide bridge links Cys-397 with Cys-410.

In terms of assembly, heterohexamer; disulfide linked. Contains 2 sets of 3 non-identical chains (alpha, beta and gamma). The 2 heterotrimers are in head to head conformation with the N-termini in a small central domain. In terms of processing, conversion of fibrinogen to fibrin is triggered by thrombin, which cleaves fibrinopeptides A and B from alpha and beta chains, and thus exposes the N-terminal polymerization sites responsible for the formation of the soft clot. The soft clot is converted into the hard clot by factor XIIIA which catalyzes the epsilon-(gamma-glutamyl)lysine cross-linking between gamma chains (stronger) and between alpha chains (weaker) of different monomers.

It localises to the secreted. Functionally, cleaved by the protease thrombin to yield monomers which, together with fibrinogen alpha (FGA) and fibrinogen gamma (FGG), polymerize to form an insoluble fibrin matrix. Fibrin has a major function in hemostasis as one of the primary components of blood clots. The sequence is that of Fibrinogen beta chain (FGB) from Gallus gallus (Chicken).